A 152-amino-acid polypeptide reads, in one-letter code: uncharacterized protein (152 aa).

Positions 1 to 24 (MRKMLAYTLYIVTYLTYIMNEVEC) are cleaved as a signal peptide.

This is an uncharacterized protein from Acheta domesticus (House cricket).